The sequence spans 314 residues: tRNA-cytidine(32) 2-sulfurtransferase (314 aa).

A PP-loop motif motif is present at residues 39–44 (SGGKDS). C114, C117, and C205 together coordinate [4Fe-4S] cluster.

This sequence belongs to the TtcA family. In terms of assembly, homodimer. It depends on Mg(2+) as a cofactor. The cofactor is [4Fe-4S] cluster.

It is found in the cytoplasm. It carries out the reaction cytidine(32) in tRNA + S-sulfanyl-L-cysteinyl-[cysteine desulfurase] + AH2 + ATP = 2-thiocytidine(32) in tRNA + L-cysteinyl-[cysteine desulfurase] + A + AMP + diphosphate + H(+). It functions in the pathway tRNA modification. Its function is as follows. Catalyzes the ATP-dependent 2-thiolation of cytidine in position 32 of tRNA, to form 2-thiocytidine (s(2)C32). The sulfur atoms are provided by the cysteine/cysteine desulfurase (IscS) system. This chain is tRNA-cytidine(32) 2-sulfurtransferase, found in Cupriavidus metallidurans (strain ATCC 43123 / DSM 2839 / NBRC 102507 / CH34) (Ralstonia metallidurans).